Reading from the N-terminus, the 335-residue chain is Methyltransferase pgmE (335 aa).

This sequence belongs to the methyltransferase superfamily.

The protein operates within pigment biosynthesis. It participates in secondary metabolite biosynthesis. Its function is as follows. Methyltransferase; part of the gene cluster that mediates the biosynthesis of pleosporalin A, ascomycone A, as well as a third cryptic naphthoquinone derived pigment, all responsible for the coloration of conidia. Essential for the production of pleosporalin A, but not the 2 other final products. The pathway begins with the biosynthesis of the cyclized heptaketide 3-acetonyl-1,6,8-trihydroxy-2-naphthaldehyde by the NR-PKS pgmA. The C-6 hydroxyl group is further methylated by the O-methyltransferase pgmB to yield fusarubinaldehyde which is in turn oxidized by the cytochrome P450 monooxygenase pgmC at C-9. The C-1 hydroxyl group is then methylated spontaneously. Although pgmE, pgmD and pgmH are essential for the production of pleosporalin A, it is not the case for the 2 other final products and it remains difficult to assign a specific function to each enzyme. PgmF and pgmG seem not to be involved in pigment biosynthesis although they were regulated by the cluster-specific transcription factor pgmR. In Aspergillus terreus (strain NIH 2624 / FGSC A1156), this protein is Methyltransferase pgmE.